The chain runs to 929 residues: MAVKSLVFRRKFPLLVTGSLLALQPVAALTVQAADQFDCKVSATGGWDCSPLQNANANLPPRPAHTATSVSTAAAGSSVSGSGGETVEAEPTQRLVTESGGRALKSRSADYSHLDWIPREKLTAAQLAEIGPYCGGSYIEPVRPGMDDGAPSDESPTYVSAKASRYEQEKQIATLAGDVVLRQGSMQVEGDEANLHQLENRGELVGNVKLRDKGMLVVGDHAQVQLDNGEAQVDNAEYVIHKAHARGSALYAKRSENAIIMLKDGTYTRCEPSSNAWTLKGNNVKLNPATGFGTATNATLRVKDFPVFYTPYIYFPIDDRRQSGFLPPSFSSTSDTGFTLVTPYYFNLAPNYDATLYPRYMAKRGMMLEGEFRYLTHSSEGTVNAAYLNDKDDHRENFPDYSKDRWLYGLKNTTGLDSRWLAEVDYTRISDPYYFQDLDTDLGVGSTTYVNQRGTLTYRGDTFTGRLNAQAYQLATTTDVTPYERLPQITFDGFLPYEPGGVKFNYSTEFVRFDRDLDDNIYLNDDGSEWGRRPDAYLQGLARSTGDRVHLEPGMSLPMTRSWGYLTPTLKYLYTKYDLDLDSQGKRTLTTYDETFDSSQDRSLPLVKVDSGLYFDRDTTLAGTQFRQTLEPRAMYLYVPYKDQENIPVFDTSEPSFSYDSLWRENRFSGRDRIGDANQLSLGVTTRFIESNGFERASLSAGQIYYFRDRRVQLPGLSEKDLALMRSKNPNLDLKDPDTDSWRSPYALMGQYRFNRDWRVSSDFNWNPNTSRTESGSAMFHYQPEDNPNKVVNAGYRYREDSRRFNSSTGRFEYGRENDIIKQHDFSVIWPLVPQWSVLARWQYDYNKNRTLEAFGGFEYDSCCWKLRLINRYWLDVDDDAFLNQNEKADRGIFLQIVLKGLGGIVGNKTEMFLDKGIQGYRQREDQAM.

An N-terminal signal peptide occupies residues 1–33; the sequence is MAVKSLVFRRKFPLLVTGSLLALQPVAALTVQA. The tract at residues 58 to 101 is disordered; sequence NLPPRPAHTATSVSTAAAGSSVSGSGGETVEAEPTQRLVTESGG. The segment covering 66–90 has biased composition (low complexity); it reads TATSVSTAAAGSSVSGSGGETVEAE.

The protein belongs to the LptD family. Component of the lipopolysaccharide transport and assembly complex. Interacts with LptE and LptA.

It localises to the cell outer membrane. Together with LptE, is involved in the assembly of lipopolysaccharide (LPS) at the surface of the outer membrane. In Pseudomonas aeruginosa (strain LESB58), this protein is LPS-assembly protein LptD.